The following is a 392-amino-acid chain: S-adenosylmethionine synthase (392 aa).

H20 serves as a coordination point for ATP. Position 22 (D22) interacts with Mg(2+). K(+) is bound at residue E48. E61 and Q106 together coordinate L-methionine. The interval 106 to 116 is flexible loop; it reads QSQDIINAIKK. ATP-binding positions include 171–173, D248, 254–255, A271, and K275; these read DSK and RK. D248 provides a ligand contact to L-methionine. L-methionine is bound at residue K279.

It belongs to the AdoMet synthase family. In terms of assembly, homotetramer; dimer of dimers. It depends on Mg(2+) as a cofactor. K(+) serves as cofactor.

It is found in the cytoplasm. It carries out the reaction L-methionine + ATP + H2O = S-adenosyl-L-methionine + phosphate + diphosphate. It participates in amino-acid biosynthesis; S-adenosyl-L-methionine biosynthesis; S-adenosyl-L-methionine from L-methionine: step 1/1. Functionally, catalyzes the formation of S-adenosylmethionine (AdoMet) from methionine and ATP. The overall synthetic reaction is composed of two sequential steps, AdoMet formation and the subsequent tripolyphosphate hydrolysis which occurs prior to release of AdoMet from the enzyme. The chain is S-adenosylmethionine synthase from Borrelia garinii subsp. bavariensis (strain ATCC BAA-2496 / DSM 23469 / PBi) (Borreliella bavariensis).